We begin with the raw amino-acid sequence, 361 residues long: Peptide chain release factor 1 (361 aa).

Gln237 carries the N5-methylglutamine modification. Over residues 284–296 (EDEKRRSEEDSTR) the composition is skewed to basic and acidic residues. Positions 284-305 (EDEKRRSEEDSTRRNLVSSGDR) are disordered.

This sequence belongs to the prokaryotic/mitochondrial release factor family. In terms of processing, methylated by PrmC. Methylation increases the termination efficiency of RF1.

Its subcellular location is the cytoplasm. Functionally, peptide chain release factor 1 directs the termination of translation in response to the peptide chain termination codons UAG and UAA. The chain is Peptide chain release factor 1 from Shewanella piezotolerans (strain WP3 / JCM 13877).